The chain runs to 367 residues: Ribosomal RNA large subunit methyltransferase M (367 aa).

Residues serine 188, 221–224 (CPGG), aspartate 240, aspartate 260, and aspartate 277 contribute to the S-adenosyl-L-methionine site. Lysine 306 serves as the catalytic Proton acceptor.

It belongs to the class I-like SAM-binding methyltransferase superfamily. RNA methyltransferase RlmE family. RlmM subfamily. As to quaternary structure, monomer.

It is found in the cytoplasm. It carries out the reaction cytidine(2498) in 23S rRNA + S-adenosyl-L-methionine = 2'-O-methylcytidine(2498) in 23S rRNA + S-adenosyl-L-homocysteine + H(+). Catalyzes the 2'-O-methylation at nucleotide C2498 in 23S rRNA. The polypeptide is Ribosomal RNA large subunit methyltransferase M (Serratia proteamaculans (strain 568)).